Here is a 227-residue protein sequence, read N- to C-terminus: Peptidyl-tRNA hydrolase (227 aa).

Y14 provides a ligand contact to tRNA. Residue H19 is the Proton acceptor of the active site. TRNA contacts are provided by F64, N66, and N112. A disordered region spans residues 182–227 (RIALLTQPPKPPKPPKPPKDGAKETAGKGTEAETAKPPGPAAGRTG). Residues 198 to 215 (PPKDGAKETAGKGTEAET) are compositionally biased toward basic and acidic residues.

Belongs to the PTH family. Monomer.

Its subcellular location is the cytoplasm. The enzyme catalyses an N-acyl-L-alpha-aminoacyl-tRNA + H2O = an N-acyl-L-amino acid + a tRNA + H(+). Hydrolyzes ribosome-free peptidyl-tRNAs (with 1 or more amino acids incorporated), which drop off the ribosome during protein synthesis, or as a result of ribosome stalling. Its function is as follows. Catalyzes the release of premature peptidyl moieties from peptidyl-tRNA molecules trapped in stalled 50S ribosomal subunits, and thus maintains levels of free tRNAs and 50S ribosomes. The chain is Peptidyl-tRNA hydrolase from Rhodospirillum centenum (strain ATCC 51521 / SW).